The following is a 336-amino-acid chain: tRNA (guanine(10)-N2)-dimethyltransferase (336 aa).

The 98-residue stretch at 50 to 147 (KILKKRLAYA…NDRFILTRRL (98 aa)) folds into the THUMP domain.

It belongs to the methyltransferase superfamily. Trm-G10 family. In terms of assembly, monomer.

It is found in the cytoplasm. It catalyses the reaction guanosine(10) in tRNA + 2 S-adenosyl-L-methionine = N(2)-dimethylguanosine(10) in tRNA + 2 S-adenosyl-L-homocysteine + 2 H(+). Catalyzes the adenosylmethionine-dependent methylation of the exocyclic amino group (N(2)) of guanosine at position 10 of various tRNAs. Acts via a two-step process that leads to the formation of either N(2)-monomethyl (m(2)G) or N(2)-dimethylguanosine (m(2)(2)G). The polypeptide is tRNA (guanine(10)-N2)-dimethyltransferase (trmG10) (Methanothermobacter thermautotrophicus (strain ATCC 29096 / DSM 1053 / JCM 10044 / NBRC 100330 / Delta H) (Methanobacterium thermoautotrophicum)).